The sequence spans 127 residues: Large ribosomal subunit protein eL24 (127 aa).

The disordered stretch occupies residues 93 to 127; sequence KRAQKPEVKQAAAEQAKREIKEKKKAAAKKAAPKK. Over residues 115–127 the composition is skewed to basic residues; sequence KKKAAAKKAAPKK.

The protein belongs to the eukaryotic ribosomal protein eL24 family.

This is Large ribosomal subunit protein eL24 (rpl24) from Dictyostelium discoideum (Social amoeba).